The sequence spans 689 residues: Armadillo-like helical domain-containing protein 3 (689 aa).

The helical transmembrane segment at 520-538 (IFTLALMIVNLFNMFITYG) threads the bilayer.

The protein belongs to the ARMH3 family. Interacts with PI4KB. Interacts with GBF1.

The protein localises to the golgi apparatus membrane. The protein resides in the cytoplasm. Involved in GBF1 recruitment, Golgi maintenance and protein secretion. The protein is Armadillo-like helical domain-containing protein 3 of Homo sapiens (Human).